The primary structure comprises 373 residues: SAM domain-containing protein SAMSN-1 (373 aa).

The tract at residues 1 to 72 (MLKRKPSNVS…GGGLGKKMRA (72 aa)) is disordered. The Important for interaction with 14-3-3 proteins signature appears at 20–25 (RSSSFG). Phosphoserine is present on residues Ser-23 and Ser-34. Positions 37–48 (KPDDSTEAHEGD) are enriched in basic and acidic residues. The span at 50-61 (TNGSGEQSKTSN) shows a compositional bias: polar residues. Ser-74 carries the phosphoserine modification. Phosphothreonine is present on Thr-76. 2 positions are modified to phosphoserine: Ser-90 and Ser-119. The segment at 91 to 153 (EEKDEEDGEN…DGTSNRDSFR (63 aa)) is disordered. A compositionally biased stretch (low complexity) spans 123–146 (SDSMDSLYSGQSSSSGITSCSDGT). Tyr-160 is modified (phosphotyrosine). In terms of domain architecture, SH3 spans 163–224 (PFCGRARVHT…KFIYVDVISE (62 aa)). The 65-residue stretch at 241–305 (KKSKTLQEFL…LSAAENFLEE (65 aa)) folds into the SAM domain. Residues 337 to 359 (DSGCYISSGNSDNGKEDLESENL) form a disordered region.

In terms of assembly, interacts with FASLG. Interacts with phosphotyrosine containing proteins. Interacts (via SH3 domain) with CTTN. Interacts (phosphorylated at Ser-23) with YWHAB, YWHAE, YWHAG, YWHAH, YWHAZ and SFN. Interacts directly with SAP30 and HDAC1. Identified in a complex with SAP30 and HDAC1. Detected in peripheral blood B-cells (at protein level). Detected in spleen, liver and peripheral blood.

The protein localises to the nucleus. The protein resides in the cytoplasm. It localises to the cell projection. It is found in the ruffle. Negative regulator of B-cell activation. Down-regulates cell proliferation (in vitro). Promotes RAC1-dependent membrane ruffle formation and reorganization of the actin cytoskeleton. Regulates cell spreading and cell polarization. Stimulates HDAC1 activity. Regulates LYN activity by modulating its tyrosine phosphorylation. This Homo sapiens (Human) protein is SAM domain-containing protein SAMSN-1 (SAMSN1).